Here is a 243-residue protein sequence, read N- to C-terminus: Pyridoxine 5'-phosphate synthase (243 aa).

Asn9 contacts 3-amino-2-oxopropyl phosphate. 11 to 12 (DH) is a 1-deoxy-D-xylulose 5-phosphate binding site. Arg20 is a 3-amino-2-oxopropyl phosphate binding site. His45 acts as the Proton acceptor in catalysis. Arg47 and His52 together coordinate 1-deoxy-D-xylulose 5-phosphate. Glu72 serves as the catalytic Proton acceptor. Thr102 contributes to the 1-deoxy-D-xylulose 5-phosphate binding site. Catalysis depends on His193, which acts as the Proton donor. Residues Gly194 and 215-216 (GH) each bind 3-amino-2-oxopropyl phosphate.

The protein belongs to the PNP synthase family. As to quaternary structure, homooctamer; tetramer of dimers.

It is found in the cytoplasm. The catalysed reaction is 3-amino-2-oxopropyl phosphate + 1-deoxy-D-xylulose 5-phosphate = pyridoxine 5'-phosphate + phosphate + 2 H2O + H(+). It functions in the pathway cofactor biosynthesis; pyridoxine 5'-phosphate biosynthesis; pyridoxine 5'-phosphate from D-erythrose 4-phosphate: step 5/5. Its function is as follows. Catalyzes the complicated ring closure reaction between the two acyclic compounds 1-deoxy-D-xylulose-5-phosphate (DXP) and 3-amino-2-oxopropyl phosphate (1-amino-acetone-3-phosphate or AAP) to form pyridoxine 5'-phosphate (PNP) and inorganic phosphate. The polypeptide is Pyridoxine 5'-phosphate synthase (Vibrio parahaemolyticus serotype O3:K6 (strain RIMD 2210633)).